Here is a 533-residue protein sequence, read N- to C-terminus: Retinoic acid receptor RXR-beta (533 aa).

Positions methionine 1–glycine 23 are disordered. Positions methionine 1–leucine 204 are modulating. Position 25 is an omega-N-methylarginine (arginine 25). Positions tryptophan 36 to proline 181 are disordered. A compositionally biased stretch (low complexity) spans alanine 46 to proline 61. A compositionally biased stretch (basic and acidic residues) spans glutamate 67–serine 82. Composition is skewed to pro residues over residues asparagine 89–threonine 109 and alanine 118–serine 131. Over residues proline 132–proline 143 the composition is skewed to low complexity. A compositionally biased stretch (pro residues) spans glycine 144–phenylalanine 153. 2 consecutive NR C4-type zinc fingers follow at residues cysteine 205–cysteine 225 and cysteine 241–cysteine 265. The segment at residues cysteine 205 to methionine 270 is a DNA-binding region (nuclear receptor). A hinge region spans residues lysine 271 to alanine 295. Basic and acidic residues predominate over residues glutamine 276–aspartate 288. 2 disordered regions span residues glutamine 276–methionine 299 and glutamine 313–valine 336. Residues proline 296 to proline 529 form the NR LBD domain. Residues glutamate 320–glycine 329 show a composition bias toward gly residues.

The protein belongs to the nuclear hormone receptor family. NR2 subfamily. Homodimer (in vitro). Heterodimer with other retinoic acid receptor family members. Binds DNA preferentially as a RAR/RXR heterodimer. Interacts with NR1H3. Interacts with AKAP13. Expressed in aortic endothelial cells (at protein level). Expressed in monocytes. Expressed in a variety of tumor cell lines.

It localises to the nucleus. The protein resides in the cytoplasm. Functionally, receptor for retinoic acid. Retinoic acid receptors bind as heterodimers to their target response elements in response to their ligands, all-trans or 9-cis retinoic acid, and regulate gene expression in various biological processes. The RAR/RXR heterodimers bind to the retinoic acid response elements (RARE). The polypeptide is Retinoic acid receptor RXR-beta (RXRB) (Homo sapiens (Human)).